We begin with the raw amino-acid sequence, 312 residues long: Ribosomal protein L11 methyltransferase (312 aa).

S-adenosyl-L-methionine-binding residues include threonine 160, glycine 181, aspartate 203, and asparagine 246.

It belongs to the methyltransferase superfamily. PrmA family.

It localises to the cytoplasm. It carries out the reaction L-lysyl-[protein] + 3 S-adenosyl-L-methionine = N(6),N(6),N(6)-trimethyl-L-lysyl-[protein] + 3 S-adenosyl-L-homocysteine + 3 H(+). In terms of biological role, methylates ribosomal protein L11. This chain is Ribosomal protein L11 methyltransferase, found in Staphylococcus aureus (strain USA300).